The following is a 729-amino-acid chain: Transketolase (729 aa).

Histidine 97 provides a ligand contact to substrate. Residues histidine 138 and 186–188 (GPL) each bind thiamine diphosphate. Position 227 (aspartate 227) interacts with Mg(2+). Glycine 228 and asparagine 257 together coordinate thiamine diphosphate. Mg(2+) is bound by residues asparagine 257 and isoleucine 259. Substrate contacts are provided by histidine 332, arginine 423, and serine 450. Histidine 332 is a thiamine diphosphate binding site. Glutamate 477 functions as the Proton donor in the catalytic mechanism. Phenylalanine 503 provides a ligand contact to thiamine diphosphate. Residues histidine 527, aspartate 535, and arginine 586 each coordinate substrate.

Belongs to the transketolase family. As to quaternary structure, homodimer. It depends on Mg(2+) as a cofactor. Ca(2+) serves as cofactor. Mn(2+) is required as a cofactor. The cofactor is Co(2+). Requires thiamine diphosphate as cofactor.

It carries out the reaction D-sedoheptulose 7-phosphate + D-glyceraldehyde 3-phosphate = aldehydo-D-ribose 5-phosphate + D-xylulose 5-phosphate. In terms of biological role, catalyzes the transfer of a two-carbon ketol group from a ketose donor to an aldose acceptor, via a covalent intermediate with the cofactor thiamine pyrophosphate. In Streptococcus pyogenes serotype M18 (strain MGAS8232), this protein is Transketolase (tkt).